A 419-amino-acid chain; its full sequence is Histidine--tRNA ligase (419 aa).

The protein belongs to the class-II aminoacyl-tRNA synthetase family. As to quaternary structure, homodimer.

It localises to the cytoplasm. The enzyme catalyses tRNA(His) + L-histidine + ATP = L-histidyl-tRNA(His) + AMP + diphosphate + H(+). The protein is Histidine--tRNA ligase of Desulfatibacillum aliphaticivorans.